The following is a 523-amino-acid chain: Bifunctional purine biosynthesis protein PurH (523 aa).

One can recognise an MGS-like domain in the interval Asp4–Thr152.

This sequence belongs to the PurH family.

The catalysed reaction is (6R)-10-formyltetrahydrofolate + 5-amino-1-(5-phospho-beta-D-ribosyl)imidazole-4-carboxamide = 5-formamido-1-(5-phospho-D-ribosyl)imidazole-4-carboxamide + (6S)-5,6,7,8-tetrahydrofolate. The enzyme catalyses IMP + H2O = 5-formamido-1-(5-phospho-D-ribosyl)imidazole-4-carboxamide. It functions in the pathway purine metabolism; IMP biosynthesis via de novo pathway; 5-formamido-1-(5-phospho-D-ribosyl)imidazole-4-carboxamide from 5-amino-1-(5-phospho-D-ribosyl)imidazole-4-carboxamide (10-formyl THF route): step 1/1. Its pathway is purine metabolism; IMP biosynthesis via de novo pathway; IMP from 5-formamido-1-(5-phospho-D-ribosyl)imidazole-4-carboxamide: step 1/1. The protein is Bifunctional purine biosynthesis protein PurH of Mycobacterium marinum (strain ATCC BAA-535 / M).